The primary structure comprises 344 residues: 2-aminoethylphosphonate--pyruvate transaminase (344 aa).

N6-(pyridoxal phosphate)lysine is present on K194.

This sequence belongs to the class-V pyridoxal-phosphate-dependent aminotransferase family. PhnW subfamily. Homodimer. Requires pyridoxal 5'-phosphate as cofactor.

The enzyme catalyses (2-aminoethyl)phosphonate + pyruvate = phosphonoacetaldehyde + L-alanine. Involved in phosphonate degradation. The protein is 2-aminoethylphosphonate--pyruvate transaminase of Bacillus cereus.